Reading from the N-terminus, the 389-residue chain is Chalcone synthase E (389 aa).

C164 is a catalytic residue.

Belongs to the thiolase-like superfamily. Chalcone/stilbene synthases family.

The enzyme catalyses (E)-4-coumaroyl-CoA + 3 malonyl-CoA + 3 H(+) = 2',4,4',6'-tetrahydroxychalcone + 3 CO2 + 4 CoA. It functions in the pathway secondary metabolite biosynthesis; flavonoid biosynthesis. The primary product of this enzyme is 4,2',4',6'-tetrahydroxychalcone (also termed naringenin-chalcone or chalcone) which can under specific conditions spontaneously isomerize into naringenin. This is Chalcone synthase E (CHSE) from Ipomoea nil (Japanese morning glory).